Consider the following 287-residue polypeptide: ATP synthase gamma chain (287 aa).

Belongs to the ATPase gamma chain family. F-type ATPases have 2 components, CF(1) - the catalytic core - and CF(0) - the membrane proton channel. CF(1) has five subunits: alpha(3), beta(3), gamma(1), delta(1), epsilon(1). CF(0) has three main subunits: a, b and c.

Its subcellular location is the cell inner membrane. Functionally, produces ATP from ADP in the presence of a proton gradient across the membrane. The gamma chain is believed to be important in regulating ATPase activity and the flow of protons through the CF(0) complex. This Yersinia pestis protein is ATP synthase gamma chain.